The primary structure comprises 459 residues: Bifunctional protein GlmU (459 aa).

A pyrophosphorylase region spans residues 1-230; sequence MSNRFAVILA…FDETLGVNDR (230 aa). Residues 9–12, Lys23, Gln73, and 78–79 contribute to the UDP-N-acetyl-alpha-D-glucosamine site; these read LAAG and GT. Asp103 serves as a coordination point for Mg(2+). UDP-N-acetyl-alpha-D-glucosamine contacts are provided by Gly140, Glu155, Asn170, and Asn228. Asn228 serves as a coordination point for Mg(2+). The linker stretch occupies residues 231–251; it reads VALSQAEIIMKNRINRKNMVN. The N-acetyltransferase stretch occupies residues 252 to 459; that stretch reads GVTIIDPSNT…VDQLLNKKKS (208 aa). 2 residues coordinate UDP-N-acetyl-alpha-D-glucosamine: Arg333 and Lys351. His363 serves as the catalytic Proton acceptor. UDP-N-acetyl-alpha-D-glucosamine-binding residues include Tyr366 and Asn377. Acetyl-CoA contacts are provided by residues 386–387, Ala423, and Arg440; that span reads NY.

This sequence in the N-terminal section; belongs to the N-acetylglucosamine-1-phosphate uridyltransferase family. It in the C-terminal section; belongs to the transferase hexapeptide repeat family. In terms of assembly, homotrimer. It depends on Mg(2+) as a cofactor.

The protein localises to the cytoplasm. The enzyme catalyses alpha-D-glucosamine 1-phosphate + acetyl-CoA = N-acetyl-alpha-D-glucosamine 1-phosphate + CoA + H(+). It catalyses the reaction N-acetyl-alpha-D-glucosamine 1-phosphate + UTP + H(+) = UDP-N-acetyl-alpha-D-glucosamine + diphosphate. Its pathway is nucleotide-sugar biosynthesis; UDP-N-acetyl-alpha-D-glucosamine biosynthesis; N-acetyl-alpha-D-glucosamine 1-phosphate from alpha-D-glucosamine 6-phosphate (route II): step 2/2. It functions in the pathway nucleotide-sugar biosynthesis; UDP-N-acetyl-alpha-D-glucosamine biosynthesis; UDP-N-acetyl-alpha-D-glucosamine from N-acetyl-alpha-D-glucosamine 1-phosphate: step 1/1. It participates in bacterial outer membrane biogenesis; LPS lipid A biosynthesis. Catalyzes the last two sequential reactions in the de novo biosynthetic pathway for UDP-N-acetylglucosamine (UDP-GlcNAc). The C-terminal domain catalyzes the transfer of acetyl group from acetyl coenzyme A to glucosamine-1-phosphate (GlcN-1-P) to produce N-acetylglucosamine-1-phosphate (GlcNAc-1-P), which is converted into UDP-GlcNAc by the transfer of uridine 5-monophosphate (from uridine 5-triphosphate), a reaction catalyzed by the N-terminal domain. The protein is Bifunctional protein GlmU of Bacillus cereus (strain ZK / E33L).